A 203-amino-acid chain; its full sequence is A-type ATP synthase subunit E (203 aa).

This sequence belongs to the V-ATPase E subunit family. In terms of assembly, has multiple subunits with at least A(3), B(3), C, D, E, F, H, I and proteolipid K(x).

The protein resides in the cell membrane. Component of the A-type ATP synthase that produces ATP from ADP in the presence of a proton gradient across the membrane. The polypeptide is A-type ATP synthase subunit E (Methanococcus maripaludis (strain DSM 14266 / JCM 13030 / NBRC 101832 / S2 / LL)).